We begin with the raw amino-acid sequence, 532 residues long: NMDA receptor synaptonuclear signaling and neuronal migration factor (532 aa).

The N-myristoyl glycine moiety is linked to residue Gly2. A necessary and sufficient to elicit dendritic processes and synaptic contacts region spans residues 2–235; the sequence is GAAASRRRAL…FSFQTATTTM (234 aa). 2 disordered regions span residues 34-67 and 127-174; these read SQSHPENRNGADHLLADAYSGHEGSPEMQPAPHN and RRQR…GCAK. Residues 38–48 show a composition bias toward basic and acidic residues; sequence PENRNGADHLL. Residues 127–139 are compositionally biased toward basic residues; that stretch reads RRQRERHPHHHSQ. Over residues 155–164 the composition is skewed to polar residues; that stretch reads PCQSWAGSRQ. A Phosphoserine modification is found at Ser206. The short motif at 247–252 is the Nuclear localization signal element; sequence RKRRKR. A disordered region spans residues 275-315; that stretch reads RVKAQTFAERRERSFSRSWSDPTPMKADTSHDSRDSSDLQS. 2 positions are modified to phosphoserine: Ser292 and Ser294. Residues 302 to 311 are compositionally biased toward basic and acidic residues; that stretch reads DTSHDSRDSS.

It belongs to the NSMF family. In terms of assembly, interacts with KPNA1; the interaction occurs in a calcium-independent manner after synaptic NMDA receptor stimulation and is required for nuclear import of NSMF but is competed by CABP1. Interacts (via the central NLS-containing motif region) with CABP1 (via EF-hands 1 and 2); the interaction occurs in a calcium-dependent manner after synaptic NMDA receptor stimulation and prevents the nuclear import of NSMF. Cannot be competed by calmodulin. Proteolytically processed after NMDA receptor activation. Cleaved in a calcium-dependent and calpain-sensitive manner. Calpain cleavage is essential for the translocation process from dendrites to the nucleus. As to expression, expressed in the radiatum and pyramidale strata of the hippocampus (at protein level). Strongly expressed in the brain. Expressed in the sensory and motor cortex, hippocampus, olfactory bulb, thalamus and amygdala. In the olfactory bulb expressed in the granular cell layer, mitral cell layer and the glomerular layer. In the hippocampus highly expressed in the regions associated with neuronal cell types as CA1, CA2, CA3 and granule cells of the dentate gyrus. All isoforms have been detected in the molecular layers of the hippocampus.

The protein localises to the nucleus. It localises to the nucleus envelope. The protein resides in the nucleus membrane. It is found in the nucleus matrix. Its subcellular location is the cytoplasm. The protein localises to the cell cortex. It localises to the cytoskeleton. The protein resides in the cell membrane. It is found in the cell projection. Its subcellular location is the dendrite. The protein localises to the synapse. It localises to the synaptosome. The protein resides in the postsynaptic density. It is found in the membrane. Couples NMDA-sensitive glutamate receptor signaling to the nucleus and triggers long-lasting changes in the cytoarchitecture of dendrites and spine synapse processes. Part of the cAMP response element-binding protein (CREB) shut-off signaling pathway. Stimulates outgrowth of olfactory axons and migration of gonadotropin-releasing hormone (GnRH) and luteinizing-hormone-releasing hormone (LHRH) neuronal cells. This Rattus norvegicus (Rat) protein is NMDA receptor synaptonuclear signaling and neuronal migration factor (Nsmf).